The primary structure comprises 190 residues: Ohanin (190 aa).

A signal peptide spans Met-1–Ala-20. The region spanning Ser-21 to Leu-127 is the B30.2/SPRY domain. Positions Arg-128–Leu-190 are excised as a propeptide.

Expressed by the venom gland.

It localises to the secreted. Its function is as follows. Neurotoxin that produces dose-dependent hypolocomotion and hyperalgesia in mice. May directly act on the central nervous system, as it is 6500-fold more potent when administered intracerebroventricularly than intraperitoneal. The protein is Ohanin of Ophiophagus hannah (King cobra).